The chain runs to 348 residues: S-adenosylmethionine:tRNA ribosyltransferase-isomerase (348 aa).

This sequence belongs to the QueA family. As to quaternary structure, monomer.

The protein localises to the cytoplasm. It carries out the reaction 7-aminomethyl-7-carbaguanosine(34) in tRNA + S-adenosyl-L-methionine = epoxyqueuosine(34) in tRNA + adenine + L-methionine + 2 H(+). Its pathway is tRNA modification; tRNA-queuosine biosynthesis. Transfers and isomerizes the ribose moiety from AdoMet to the 7-aminomethyl group of 7-deazaguanine (preQ1-tRNA) to give epoxyqueuosine (oQ-tRNA). The polypeptide is S-adenosylmethionine:tRNA ribosyltransferase-isomerase (Polynucleobacter asymbioticus (strain DSM 18221 / CIP 109841 / QLW-P1DMWA-1) (Polynucleobacter necessarius subsp. asymbioticus)).